Reading from the N-terminus, the 290-residue chain is 4-hydroxy-3-methylbut-2-enyl diphosphate reductase (290 aa).

C13 contacts [4Fe-4S] cluster. Positions 41 and 75 each coordinate (2E)-4-hydroxy-3-methylbut-2-enyl diphosphate. Dimethylallyl diphosphate-binding residues include H41 and H75. H41 and H75 together coordinate isopentenyl diphosphate. C97 is a binding site for [4Fe-4S] cluster. H129 is a binding site for (2E)-4-hydroxy-3-methylbut-2-enyl diphosphate. H129 serves as a coordination point for dimethylallyl diphosphate. H129 is a binding site for isopentenyl diphosphate. E131 (proton donor) is an active-site residue. A (2E)-4-hydroxy-3-methylbut-2-enyl diphosphate-binding site is contributed by T167. C198 contributes to the [4Fe-4S] cluster binding site. Residues S226, S227, N228, and S270 each contribute to the (2E)-4-hydroxy-3-methylbut-2-enyl diphosphate site. Dimethylallyl diphosphate-binding residues include S226, S227, N228, and S270. Isopentenyl diphosphate-binding residues include S226, S227, N228, and S270.

This sequence belongs to the IspH family. [4Fe-4S] cluster is required as a cofactor.

It carries out the reaction isopentenyl diphosphate + 2 oxidized [2Fe-2S]-[ferredoxin] + H2O = (2E)-4-hydroxy-3-methylbut-2-enyl diphosphate + 2 reduced [2Fe-2S]-[ferredoxin] + 2 H(+). The enzyme catalyses dimethylallyl diphosphate + 2 oxidized [2Fe-2S]-[ferredoxin] + H2O = (2E)-4-hydroxy-3-methylbut-2-enyl diphosphate + 2 reduced [2Fe-2S]-[ferredoxin] + 2 H(+). It functions in the pathway isoprenoid biosynthesis; dimethylallyl diphosphate biosynthesis; dimethylallyl diphosphate from (2E)-4-hydroxy-3-methylbutenyl diphosphate: step 1/1. It participates in isoprenoid biosynthesis; isopentenyl diphosphate biosynthesis via DXP pathway; isopentenyl diphosphate from 1-deoxy-D-xylulose 5-phosphate: step 6/6. Its function is as follows. Catalyzes the conversion of 1-hydroxy-2-methyl-2-(E)-butenyl 4-diphosphate (HMBPP) into a mixture of isopentenyl diphosphate (IPP) and dimethylallyl diphosphate (DMAPP). Acts in the terminal step of the DOXP/MEP pathway for isoprenoid precursor biosynthesis. This chain is 4-hydroxy-3-methylbut-2-enyl diphosphate reductase, found in Parabacteroides distasonis (strain ATCC 8503 / DSM 20701 / CIP 104284 / JCM 5825 / NCTC 11152).